A 465-amino-acid polypeptide reads, in one-letter code: Antithrombin-III (465 aa).

The N-terminal stretch at 1–32 is a signal peptide; that stretch reads MISNGIGTVTTGKRSMCLFPLLLIGLWGCVTC. 2 cysteine pairs are disulfide-bonded: Cys41–Cys161 and Cys54–Cys128. Position 64 is a phosphothreonine (Thr64). Phosphoserine is present on Ser69. A heparin-binding site is contributed by Trp82. Asn129 carries an N-linked (GlcNAc...) asparagine glycan. Arg162 provides a ligand contact to heparin. Asn168 carries an N-linked (GlcNAc...) asparagine glycan. A heparin-binding site is contributed by Arg178. 2 N-linked (GlcNAc...) asparagine glycosylation sites follow: Asn188 and Asn225. A disulfide bridge connects residues Cys280 and Cys463.

Belongs to the serpin family. Forms protease inhibiting heterodimer with TMPRSS7. In terms of processing, phosphorylated by FAM20C in the extracellular medium. Plasma.

It localises to the secreted. Its subcellular location is the extracellular space. In terms of biological role, most important serine protease inhibitor in plasma that regulates the blood coagulation cascade. AT-III inhibits thrombin, matriptase-3/TMPRSS7, as well as factors IXa, Xa and XIa. Its inhibitory activity is greatly enhanced in the presence of heparin. This chain is Antithrombin-III (SERPINC1), found in Ovis aries (Sheep).